The following is a 222-amino-acid chain: Thymidylate kinase (222 aa).

Residues 29–34 (RVGKST) and Arg111 contribute to the ATP site. The LID stretch occupies residues 146–170 (LSMSSEDATKRGEYGGERYEKLEFQ).

This sequence belongs to the thymidylate kinase family. Homodimer. Mg(2+) serves as cofactor.

The enzyme catalyses dTMP + ATP = dTDP + ADP. The protein operates within pyrimidine metabolism; dTTP biosynthesis. In terms of biological role, catalyzes the phosphorylation of thymidine monophosphate (dTMP) to thymidine diphosphate (dTDP), the immediate precursor for the DNA building block dTTP, with ATP as the preferred phosphoryl donor in the presence of Mg(2+). In Dictyostelium discoideum (Social amoeba), this protein is Thymidylate kinase (dtymk).